Consider the following 246-residue polypeptide: Hydroxyacylglutathione hydrolase (246 aa).

Zn(2+) is bound by residues histidine 58, histidine 60, aspartate 62, histidine 63, histidine 117, aspartate 137, and histidine 175.

This sequence belongs to the metallo-beta-lactamase superfamily. Glyoxalase II family. In terms of assembly, monomer. Requires Zn(2+) as cofactor.

It carries out the reaction an S-(2-hydroxyacyl)glutathione + H2O = a 2-hydroxy carboxylate + glutathione + H(+). It participates in secondary metabolite metabolism; methylglyoxal degradation; (R)-lactate from methylglyoxal: step 2/2. Functionally, thiolesterase that catalyzes the hydrolysis of S-D-lactoyl-glutathione to form glutathione and D-lactic acid. This Prochlorococcus marinus (strain MIT 9312) protein is Hydroxyacylglutathione hydrolase.